A 284-amino-acid polypeptide reads, in one-letter code: Pantothenate synthetase (284 aa).

Residue 30–37 (MGALHNGH) coordinates ATP. The Proton donor role is filled by His-37. A (R)-pantoate-binding site is contributed by Gln-61. Gln-61 provides a ligand contact to beta-alanine. 147–150 (GEKD) provides a ligand contact to ATP. Gln-153 contributes to the (R)-pantoate binding site. Residues Leu-176 and 184-187 (SSSR) contribute to the ATP site.

Belongs to the pantothenate synthetase family. Homodimer.

The protein resides in the cytoplasm. The enzyme catalyses (R)-pantoate + beta-alanine + ATP = (R)-pantothenate + AMP + diphosphate + H(+). It participates in cofactor biosynthesis; (R)-pantothenate biosynthesis; (R)-pantothenate from (R)-pantoate and beta-alanine: step 1/1. Functionally, catalyzes the condensation of pantoate with beta-alanine in an ATP-dependent reaction via a pantoyl-adenylate intermediate. The polypeptide is Pantothenate synthetase (Bartonella henselae (strain ATCC 49882 / DSM 28221 / CCUG 30454 / Houston 1) (Rochalimaea henselae)).